Reading from the N-terminus, the 328-residue chain is Cytosolic Fe-S cluster assembly factor NBP35 (328 aa).

Positions 27, 41, 44, and 50 each coordinate [4Fe-4S] cluster. Position 80–87 (80–87 (GKGGVGKS)) interacts with ATP. The [4Fe-4S] cluster site is built by Cys-253 and Cys-256.

It belongs to the Mrp/NBP35 ATP-binding proteins family. NUBP1/NBP35 subfamily. Heterotetramer of 2 NBP35 and 2 CFD1 chains. The cofactor is [4Fe-4S] cluster.

The protein resides in the cytoplasm. The protein localises to the nucleus. Its function is as follows. Component of the cytosolic iron-sulfur (Fe/S) protein assembly (CIA) machinery. Required for maturation of extramitochondrial Fe-S proteins. The NBP35-CFD1 heterotetramer forms a Fe-S scaffold complex, mediating the de novo assembly of an Fe-S cluster and its transfer to target apoproteins. Required for biogenesis and export of both ribosomal subunits, which may reflect a role in assembly of the Fe/S clusters in RLI1, a protein which performs rRNA processing and ribosome export. The sequence is that of Cytosolic Fe-S cluster assembly factor NBP35 from Saccharomyces cerevisiae (strain ATCC 204508 / S288c) (Baker's yeast).